The primary structure comprises 207 residues: Guanylate kinase (207 aa).

The Guanylate kinase-like domain maps to 4 to 184 (GTLYIVSAPS…ALMDFKAILR (181 aa)). 11–18 (APSGAGKS) is an ATP binding site.

The protein belongs to the guanylate kinase family.

The protein resides in the cytoplasm. It catalyses the reaction GMP + ATP = GDP + ADP. Functionally, essential for recycling GMP and indirectly, cGMP. The polypeptide is Guanylate kinase (Vibrio parahaemolyticus serotype O3:K6 (strain RIMD 2210633)).